We begin with the raw amino-acid sequence, 448 residues long: Tubulin alpha-4A chain (448 aa).

The MREC motif signature appears at 1–4 (MREC). Gln11 contacts GTP. At Lys40 the chain carries N6-acetyllysine. Ser48 carries the phosphoserine modification. Position 71 (Glu71) interacts with GTP. Glu71 lines the Mg(2+) pocket. 3'-nitrotyrosine is present on Tyr83. 6 residues coordinate GTP: Ser140, Gly144, Thr145, Thr179, Asn206, and Asn228. Glu254 is a catalytic residue. At Tyr432 the chain carries Phosphotyrosine. Ser439 is modified (phosphoserine).

It belongs to the tubulin family. Dimer of alpha and beta chains. A typical microtubule is a hollow water-filled tube with an outer diameter of 25 nm and an inner diameter of 15 nM. Alpha-beta heterodimers associate head-to-tail to form protofilaments running lengthwise along the microtubule wall with the beta-tubulin subunit facing the microtubule plus end conferring a structural polarity. Microtubules usually have 13 protofilaments but different protofilament numbers can be found in some organisms and specialized cells. Interacts with CFAP157. Requires Mg(2+) as cofactor. Some glutamate residues at the C-terminus are polyglycylated, resulting in polyglycine chains on the gamma-carboxyl group. Glycylation is mainly limited to tubulin incorporated into axonemes (cilia and flagella) whereas glutamylation is prevalent in neuronal cells, centrioles, axonemes, and the mitotic spindle. Both modifications can coexist on the same protein on adjacent residues, and lowering polyglycylation levels increases polyglutamylation, and reciprocally. Cilia and flagella glycylation is required for their stability and maintenance. Flagella glycylation controls sperm motility. Post-translationally, some glutamate residues at the C-terminus are polyglutamylated, resulting in polyglutamate chains on the gamma-carboxyl group. Polyglutamylation plays a key role in microtubule severing by spastin (SPAST). SPAST preferentially recognizes and acts on microtubules decorated with short polyglutamate tails: severing activity by SPAST increases as the number of glutamates per tubulin rises from one to eight, but decreases beyond this glutamylation threshold. Glutamylation is also involved in cilia motility. In terms of processing, acetylation of alpha chains at Lys-40 is located inside the microtubule lumen. This modification has been correlated with increased microtubule stability, intracellular transport and ciliary assembly. Methylation of alpha chains at Lys-40 is found in mitotic microtubules and is required for normal mitosis and cytokinesis contributing to genomic stability. Post-translationally, although this tubulin does not encode a C-terminal tyrosine, a C-terminal tyrosine can be added post-translationally by the tubulin tyrosine ligase (TTL). It can then undergo a detyrosination cycle by the tubulin tyrosine carboxypeptidase (MATCAP1/KIAA0895L).

The protein localises to the cytoplasm. It is found in the cytoskeleton. It catalyses the reaction GTP + H2O = GDP + phosphate + H(+). Its function is as follows. Tubulin is the major constituent of microtubules, a cylinder consisting of laterally associated linear protofilaments composed of alpha- and beta-tubulin heterodimers. Microtubules grow by the addition of GTP-tubulin dimers to the microtubule end, where a stabilizing cap forms. Below the cap, tubulin dimers are in GDP-bound state, owing to GTPase activity of alpha-tubulin. This Macaca fascicularis (Crab-eating macaque) protein is Tubulin alpha-4A chain (TUBA4A).